A 105-amino-acid chain; its full sequence is MASNQQLKIRIQLRSYDSSLLENSCEQIIEAAKRTDATAVGPIPLPTKKKIYCVLRSPHVDKDSREHFEIRVHRRIIDLYLPSSKTIDTLTRLDLPAGVDVEVKL.

It belongs to the universal ribosomal protein uS10 family. In terms of assembly, part of the 30S ribosomal subunit.

It localises to the plastid. It is found in the cyanelle. Its function is as follows. Involved in the binding of tRNA to the ribosomes. The sequence is that of Small ribosomal subunit protein uS10c (rps10) from Cyanophora paradoxa.